Here is a 465-residue protein sequence, read N- to C-terminus: Indoleacetamide hydrolase (465 aa).

The tract at residues 1–40 (MVRGRHRSRDPQRRDLRGRDRRSASRTDARRQSAAERGCR) is disordered. Residues 9–39 (RDPQRRDLRGRDRRSASRTDARRQSAAERGC) are compositionally biased toward basic and acidic residues. Ser149 functions as the Charge relay system in the catalytic mechanism. Ser173 (acyl-ester intermediate) is an active-site residue.

The protein belongs to the amidase family.

It participates in plant hormone metabolism; auxin biosynthesis. Its function is as follows. Hydrolyzes indole-3-acetamide (IAM) into indole-3-acetic acid (IAA). The sequence is that of Indoleacetamide hydrolase (bam) from Bradyrhizobium japonicum.